The primary structure comprises 447 residues: N-succinylarginine dihydrolase (447 aa).

Residues 19–28, N110, and 137–138 each bind substrate; these read AGLSFGNEAS and HR. E174 is an active-site residue. Residue R214 coordinates substrate. Residue H250 is part of the active site. Substrate is bound by residues D252 and N365. C371 acts as the Nucleophile in catalysis.

It belongs to the succinylarginine dihydrolase family. In terms of assembly, homodimer.

The enzyme catalyses N(2)-succinyl-L-arginine + 2 H2O + 2 H(+) = N(2)-succinyl-L-ornithine + 2 NH4(+) + CO2. It participates in amino-acid degradation; L-arginine degradation via AST pathway; L-glutamate and succinate from L-arginine: step 2/5. Catalyzes the hydrolysis of N(2)-succinylarginine into N(2)-succinylornithine, ammonia and CO(2). The protein is N-succinylarginine dihydrolase of Acinetobacter baumannii (strain ACICU).